We begin with the raw amino-acid sequence, 207 residues long: Recombination protein RecR (207 aa).

The segment at 62-77 adopts a C4-type zinc-finger fold; sequence CSRCNTFTEQDVCETC. The region spanning 85–184 is the Toprim domain; it reads SVLCVVETPA…KVSRLARGVP (100 aa).

It belongs to the RecR family.

Its function is as follows. May play a role in DNA repair. It seems to be involved in an RecBC-independent recombinational process of DNA repair. It may act with RecF and RecO. The chain is Recombination protein RecR from Ralstonia nicotianae (strain ATCC BAA-1114 / GMI1000) (Ralstonia solanacearum).